The primary structure comprises 173 residues: MTTLSIYHRPHITQPIQQLTAFNDIASLLASAGIQLEHWQAEAPPLNASSETILTQYHADIERLKQQEGYTSADVISLTPNHAERKALREKFLQEHTHSEDEVRFFVRGSGAFFVPIGEQVFQLTCEAGDLLRVPANTPHWFDCGEFPDFVAIRIFTNPEGWVGHFTGRETFH.

Histidine 96, histidine 98, glutamate 102, and histidine 140 together coordinate Fe(2+). Residues histidine 96, histidine 98, glutamate 102, and histidine 140 each coordinate Ni(2+).

This sequence belongs to the acireductone dioxygenase (ARD) family. Monomer. Fe(2+) serves as cofactor. The cofactor is Ni(2+).

The enzyme catalyses 1,2-dihydroxy-5-(methylsulfanyl)pent-1-en-3-one + O2 = 3-(methylsulfanyl)propanoate + CO + formate + 2 H(+). It catalyses the reaction 1,2-dihydroxy-5-(methylsulfanyl)pent-1-en-3-one + O2 = 4-methylsulfanyl-2-oxobutanoate + formate + 2 H(+). The protein operates within amino-acid biosynthesis; L-methionine biosynthesis via salvage pathway; L-methionine from S-methyl-5-thio-alpha-D-ribose 1-phosphate: step 5/6. Functionally, catalyzes 2 different reactions between oxygen and the acireductone 1,2-dihydroxy-3-keto-5-methylthiopentene (DHK-MTPene) depending upon the metal bound in the active site. Fe-containing acireductone dioxygenase (Fe-ARD) produces formate and 2-keto-4-methylthiobutyrate (KMTB), the alpha-ketoacid precursor of methionine in the methionine recycle pathway. Ni-containing acireductone dioxygenase (Ni-ARD) produces methylthiopropionate, carbon monoxide and formate, and does not lie on the methionine recycle pathway. The sequence is that of Acireductone dioxygenase 1 from Pectobacterium atrosepticum (strain SCRI 1043 / ATCC BAA-672) (Erwinia carotovora subsp. atroseptica).